Reading from the N-terminus, the 402-residue chain is Probable 2,3-bisphosphoglycerate-independent phosphoglycerate mutase (402 aa).

It belongs to the BPG-independent phosphoglycerate mutase family. A-PGAM subfamily.

It carries out the reaction (2R)-2-phosphoglycerate = (2R)-3-phosphoglycerate. It functions in the pathway carbohydrate degradation; glycolysis; pyruvate from D-glyceraldehyde 3-phosphate: step 3/5. Its function is as follows. Catalyzes the interconversion of 2-phosphoglycerate and 3-phosphoglycerate. This is Probable 2,3-bisphosphoglycerate-independent phosphoglycerate mutase from Thermosipho melanesiensis (strain DSM 12029 / CIP 104789 / BI429).